An 876-amino-acid polypeptide reads, in one-letter code: MKNKLVLIDGNSVAYRAFFALPLLHNDKGIHTNAVYGFTMMLNKILAEEQPTHILVAFDAGKTTFRHETFQDYKGGRQQTPPELSEQFPLLRELLKAYRIPAYELDHYEADDIIGTMAARAEREGFAVKVISGDRDLTQLASPQVTVEITKKGITDIESYTPETVVEKYGLTPEQIVDLKGLMGDKSDNIPGVPGIGEKTAVKLLKQFGTVENVLASIDEIKGEKLKENLRQYRDLALLSKQLAAICRDAPVELTLDDIVYKGEDREKVVALFQELGFQSFLDKMAVQTDEGEKPLAGMDFAIADSVTDEMLADKAALVVEVVGDNYHHAPIVGIALANERGRFFLRPETALADPKFLAWLGDETKKKTMFDSKRAAVALKWKGIELRGVVFDLLLAAYLLDPAQAAGDVAAVAKMHQYEAVRSDEAVYGKGAKRTVPDEPTLAEHLVRKAAAIWALEEPLMDELRRNEQDRLLTELEQPLAGILANMEFTGVKVDTKRLEQMGAELTEQLQAVERRIYELAGQEFNINSPKQLGTVLFDKLQLPVLKKTKTGYSTSADVLEKLAPHHEIVEHILHYRQLGKLQSTYIEGLLKVVHPVTGKVHTMFNQALTQTGRLSSVEPNLQNIPIRLEEGRKIRQAFVPSEPDWLIFAADYSQIELRVLAHIAEDDNLIEAFRRGLDIHTKTAMDIFHVSEEDVTANMRRQAKAVNFGIVYGISDYGLAQNLNITRKEAAEFIERYFASFPGVKQYMDNIVQEAKQKGYVTTLLHRRRYLPDITSRNFNVRSFAERTAMNTPIQGSAADIIKKAMIDLSVRLREERLQARLLLQVHDELILEAPKEEIERLCRLVPEVMEQAVTLRVPLKVDYHYGPTWYDAK.

The region spanning Met-1–Glu-310 is the 5'-3' exonuclease domain. The interval Thr-289–Lys-876 is subtilisin large fragment. Positions Glu-469 to Lys-876 are polymerase.

This sequence belongs to the DNA polymerase type-A family. Single-chain monomer with multiple functions.

It catalyses the reaction DNA(n) + a 2'-deoxyribonucleoside 5'-triphosphate = DNA(n+1) + diphosphate. Its function is as follows. In addition to polymerase activity, the recombinant enzyme has strand displacement and 5'-3' exonuclease activity, but lacks proofreading 3'-5' exonuclease activity. The sequence is that of DNA polymerase I (polA) from Geobacillus stearothermophilus (Bacillus stearothermophilus).